Reading from the N-terminus, the 1254-residue chain is Structural polyprotein (1254 aa).

Residues 1–33 form a necessary for nucleocapsid assembly and virus assembly region; it reads MFPYQPMYPMQPMPFRNPFAAPRRPWFPRTDPF. The segment at 33 to 68 is host transcription inhibition; that stretch reads FLAMQVQELARSMANLTFKQRRDVPPEGPPAKKKKK. Residues 41–48 carry the Supraphysiological nuclear export signal motif; that stretch reads LARSMANL. The interval 48 to 119 is disordered; the sequence is LTFKQRRDVP…KPGKRQRMVM (72 aa). Positions 64 to 68 match the Nuclear localization signal motif; the sequence is KKKKK. Basic residues-rich tracts occupy residues 79–93 and 102–117; these read NGKKKNKLVKKKKKT and GGKKKVNKKPGKRQRM. The binding to the viral RNA stretch occupies residues 91–126; that stretch reads KKTGPPPQKTNGGKKKVNKKPGKRQRMVMKLESDKT. Thr93 bears the Phosphothreonine mark. Residues 111–125 are ribosome-binding; that stretch reads PGKRQRMVMKLESDK. Residue Ser123 is modified to Phosphoserine. Residues 125–274 form the Peptidase S3 domain; it reads KTFPIMLDGR…KYTPENSEQW (150 aa). The residue at position 126 (Thr126) is a Phosphothreonine. The active-site Charge relay system is the His151. An interaction with spike glycoprotein E2 region spans residues 167-172; the sequence is KKASKY. Active-site charge relay system residues include Asp173 and Ser225. Positions 259 to 263 are interaction with spike glycoprotein E2; that stretch reads EKGVT. The tract at residues 275-286 is functions as an uncleaved signal peptide for the precursor of protein E3/E2; the sequence is SLVTTMCLLANV. Topologically, residues 275–700 are extracellular; it reads SLVTTMCLLA…HYYHRYPMST (426 aa). Cystine bridges form between Cys281/Cys290, Cys352/Cys456, Cys355/Cys360, Cys423/Cys437, Cys484/Cys599, Cys533/Cys559, and Cys535/Cys553. An N-linked (GlcNAc...) asparagine; by host glycan is attached at Asn285. N-linked (GlcNAc...) asparagine; by host glycosylation occurs at Asn651. A helical membrane pass occupies residues 701 to 721; that stretch reads ILGLSICAAIVTTSIAASVWL. Topologically, residues 722–756 are cytoplasmic; sequence FCKSRISCLTPYRLTPNARMPLCLAVLCCARTARA. The tract at residues 724–728 is interaction with the capsid protein; the sequence is KSRIS. 3 S-palmitoyl cysteine; by host lipidation sites follow: Cys729, Cys749, and Cys750. The interval 729 to 749 is transient transmembrane before p62-6K protein processing; sequence CLTPYRLTPNARMPLCLAVLC. A disulfide bridge connects residues Cys729 and Cys750. The Extracellular segment spans residues 757–771; that stretch reads ETTWESLDHLWNHNQ. Transmembrane regions (helical) follow at residues 772-790 and 791-811; these read QMFWSQLLIPLAALIVATR and LLKCVCCVVPFLVVAGAVGAG. Over 812–1224 the chain is Extracellular; the sequence is AYEHATTMPN…SKTAWTWLTS (413 aa). Intrachain disulfides connect Cys861–Cys926, Cys874–Cys906, Cys875–Cys908, and Cys880–Cys890. Residues 896-913 are E1 fusion peptide loop; it reads VYPFMWGGAYCFCDTENT. 2 N-linked (GlcNAc...) asparagine; by host glycosylation sites follow: Asn946 and Asn1082. Intrachain disulfides connect Cys1071-Cys1083, Cys1113-Cys1188, Cys1118-Cys1192, and Cys1140-Cys1182. A helical membrane pass occupies residues 1225–1245; sequence LLGGSAIIIIIGLVLATIVAM. Topologically, residues 1246-1254 are cytoplasmic; sequence YVLTNQKHN.

In terms of assembly, homodimer. Homomultimer. Interacts with host karyopherin KPNA4; this interaction allows the nuclear import of the viral capsid protein. Interacts with spike glycoprotein E2. Interacts with host IRAK1; the interaction leads to inhibition of IRAK1-dependent signaling. Part of a tetrameric complex composed of host CRM1, host importin alpha/beta dimer and the viral capsid; this complex blocks the receptor-mediated transport through the nuclear pore. Interacts with host phosphatase PPP1CA; this interaction dephosphorylates the capsid protein, which increases its ability to bind to the viral genome. The precursor of protein E3/E2 and E1 form a heterodimer shortly after synthesis. As to quaternary structure, interacts with spike glycoprotein E2. The precursor of protein E3/E2 and E1 form a heterodimer shortly after synthesis. Processing of the precursor of protein E3/E2 into E2 and E3 results in a heterodimer of the spike glycoproteins E2 and E1. Spike at virion surface are constituted of three E2-E1 heterodimers. After target cell attachment and endocytosis, E1 change conformation to form homotrimers. Interacts with 6K protein. Interacts with host LDLRAD3; this interaction mediates viral entry to the host cell. In terms of assembly, interacts with spike glycoprotein E1. Processing of the precursor of protein E3/E2 into E2 and E3 results in a heterodimer of the spike glycoproteins E2 and E1. Spike at virion surface are constituted of a trimer of E2-E1 heterodimers. Interacts with 6K protein. Interacts with host LDLRAD3; this interaction mediates viral entry to the host cell. Oligomer. Interacts with spike glycoprotein E1. Interacts with spike glycoprotein E2. In terms of processing, structural polyprotein: Specific enzymatic cleavages in vivo yield mature proteins. Capsid protein is auto-cleaved during polyprotein translation, unmasking a signal peptide at the N-terminus of the precursor of E3/E2. The remaining polyprotein is then targeted to the host endoplasmic reticulum, where host signal peptidase cleaves it into pE2, 6K and E1 proteins. pE2 is further processed to mature E3 and E2 by host furin in trans-Golgi vesicle. Post-translationally, phosphorylated on serine and threonine residues. Palmitoylated via thioester bonds. These palmitoylations may induce disruption of the C-terminus transmembrane. This would result in the reorientation of E2 C-terminus from lumenal to cytoplasmic side. In terms of processing, N-glycosylated. Post-translationally, palmitoylated via thioester bonds.

It localises to the virion. It is found in the host cytoplasm. Its subcellular location is the host cell membrane. The protein resides in the host nucleus. The protein localises to the virion membrane. It localises to the host Golgi apparatus. It is found in the host trans-Golgi network. Its subcellular location is the host endoplasmic reticulum. It catalyses the reaction Autocatalytic release of the core protein from the N-terminus of the togavirus structural polyprotein by hydrolysis of a -Trp-|-Ser- bond.. In terms of biological role, forms an icosahedral capsid with a T=4 symmetry composed of 240 copies of the capsid protein surrounded by a lipid membrane through which penetrate 80 spikes composed of trimers of E1-E2 heterodimers. The capsid protein binds to the viral RNA genome at a site adjacent to a ribosome binding site for viral genome translation following genome release. Possesses a protease activity that results in its autocatalytic cleavage from the nascent structural protein. Following its self-cleavage, the capsid protein transiently associates with ribosomes, and within several minutes the protein binds to viral RNA and rapidly assembles into icosahedric core particles. The resulting nucleocapsid eventually associates with the cytoplasmic domain of the spike glycoprotein E2 at the cell membrane, leading to budding and formation of mature virions. In case of infection, new virions attach to target cells and after clathrin-mediated endocytosis their membrane fuses with the host endosomal membrane. This leads to the release of the nucleocapsid into the cytoplasm, followed by an uncoating event necessary for the genomic RNA to become accessible. The uncoating might be triggered by the interaction of capsid proteins with ribosomes. Binding of ribosomes would release the genomic RNA since the same region is genomic RNA-binding and ribosome-binding. Specifically inhibits interleukin-1 receptor-associated kinase 1/IRAK1-dependent signaling during viral entry, representing a means by which the alphaviruses may evade innate immune detection and activation prior to viral gene expression. Inhibits host transcription. Forms a tetrameric complex with XPO1/CRM1 and the nuclear import receptor importin. This complex blocks the central channel of host nuclear pores thereby inhibiting the receptor-mediated nuclear transport and thus the host mRNA and rRNA transcription. The inhibition of transcription is linked to a cytopathic effect on the host cell. Its function is as follows. Provides the signal sequence for the translocation of the precursor of protein E3/E2 to the host endoplasmic reticulum. Furin-cleaved E3 remains associated with spike glycoprotein E1 and mediates pH protection of the latter during the transport via the secretory pathway. After virion release from the host cell, the assembly protein E3 is gradually released in the extracellular space. Functionally, plays a role in viral attachment to target host cell, by binding to the cell receptor LDLRAD3. Synthesized as a p62 precursor which is processed by furin at the cell membrane just before virion budding, giving rise to E2-E1 heterodimer. The p62-E1 heterodimer is stable, whereas E2-E1 is unstable and dissociate at low pH. p62 is processed at the last step, presumably to avoid E1 fusion activation before its final export to cell surface. E2 C-terminus contains a transitory transmembrane that would be disrupted by palmitoylation, resulting in reorientation of the C-terminal tail from lumenal to cytoplasmic side. This step is critical since E2 C-terminus is involved in budding by interacting with capsid proteins. This release of E2 C-terminus in cytoplasm occurs lately in protein export, and precludes premature assembly of particles at the endoplasmic reticulum membrane. Acts as a viroporin that participates in virus glycoprotein processing and transport to the plasma membrane, cell permeabilization and budding of viral particles. Disrupts the calcium homeostasis of the cell, probably at the endoplasmic reticulum level. This leads to cytoplasmic calcium elevation. Because of its lipophilic properties, the 6K protein is postulated to influence the selection of lipids that interact with the transmembrane domains of the glycoproteins, which, in turn, affects the deformability of the bilayer required for the extreme curvature that occurs as budding proceeds. Present in low amount in virions, about 3% compared to viral glycoproteins. In terms of biological role, class II viral fusion protein. Fusion activity is inactive as long as E1 is bound to E2 in mature virion. After virus attachment to cell receptor LDLRAD3 and endocytosis, acidification of the endosome induce dissociation of E1/E2 heterodimer and concomitant trimerization of the E1 subunits. This E1 trimer is fusion active, and promotes release of viral nucleocapsid in cytoplasm after endosome and viral membrane fusion. Efficient fusion requires the presence of cholesterol and sphingolipid in the target membrane. This Venezuelan equine encephalitis virus (strain Mena II) (VEEV) protein is Structural polyprotein.